We begin with the raw amino-acid sequence, 298 residues long: Succinate dehydrogenase [ubiquinone] iron-sulfur subunit, mitochondrial (298 aa).

The region spanning 59–147 (YRFNPEAPGA…STKIYPLPHM (89 aa)) is the 2Fe-2S ferredoxin-type domain. [2Fe-2S] cluster is bound by residues Cys107, Cys112, Cys115, and Cys127. The 4Fe-4S ferredoxin-type domain occupies 190–220 (ERDRLDGLYECILCACCSTSCPSYWWNADKY). [4Fe-4S] cluster-binding residues include Cys200, Cys203, and Cys206. Cys210 contributes to the [3Fe-4S] cluster binding site. Trp215 serves as a coordination point for a ubiquinone. [3Fe-4S] cluster is bound by residues Cys257 and Cys263. Residue Cys267 participates in [4Fe-4S] cluster binding.

It belongs to the succinate dehydrogenase/fumarate reductase iron-sulfur protein family. Component of complex II composed of four subunits: a flavoprotein (FP), an iron-sulfur protein (IP), and a cytochrome b composed of a large and a small subunit. [2Fe-2S] cluster serves as cofactor. [3Fe-4S] cluster is required as a cofactor. Requires [4Fe-4S] cluster as cofactor.

The protein localises to the mitochondrion inner membrane. The enzyme catalyses a quinone + succinate = fumarate + a quinol. It participates in carbohydrate metabolism; tricarboxylic acid cycle; fumarate from succinate (eukaryal route): step 1/1. Its function is as follows. Iron-sulfur protein (IP) subunit of succinate dehydrogenase (SDH) that is involved in complex II of the mitochondrial electron transport chain and is responsible for transferring electrons from succinate to ubiquinone (coenzyme Q). The protein is Succinate dehydrogenase [ubiquinone] iron-sulfur subunit, mitochondrial (sdhb-1) of Caenorhabditis elegans.